Reading from the N-terminus, the 740-residue chain is 1,4-alpha-glucan branching enzyme GlgB (740 aa).

Asp419 acts as the Nucleophile in catalysis. Glu472 (proton donor) is an active-site residue.

It belongs to the glycosyl hydrolase 13 family. GlgB subfamily. In terms of assembly, monomer.

The enzyme catalyses Transfers a segment of a (1-&gt;4)-alpha-D-glucan chain to a primary hydroxy group in a similar glucan chain.. It participates in glycan biosynthesis; glycogen biosynthesis. Its function is as follows. Catalyzes the formation of the alpha-1,6-glucosidic linkages in glycogen by scission of a 1,4-alpha-linked oligosaccharide from growing alpha-1,4-glucan chains and the subsequent attachment of the oligosaccharide to the alpha-1,6 position. The protein is 1,4-alpha-glucan branching enzyme GlgB of Thiobacillus denitrificans (strain ATCC 25259 / T1).